We begin with the raw amino-acid sequence, 270 residues long: Putative phosphoenolpyruvate synthase regulatory protein (270 aa).

Residue 150 to 157 (GVSRCGKT) coordinates ADP.

It belongs to the pyruvate, phosphate/water dikinase regulatory protein family. PSRP subfamily.

The enzyme catalyses [pyruvate, water dikinase] + ADP = [pyruvate, water dikinase]-phosphate + AMP + H(+). It carries out the reaction [pyruvate, water dikinase]-phosphate + phosphate + H(+) = [pyruvate, water dikinase] + diphosphate. Its function is as follows. Bifunctional serine/threonine kinase and phosphorylase involved in the regulation of the phosphoenolpyruvate synthase (PEPS) by catalyzing its phosphorylation/dephosphorylation. This chain is Putative phosphoenolpyruvate synthase regulatory protein, found in Shewanella amazonensis (strain ATCC BAA-1098 / SB2B).